The sequence spans 213 residues: MAGRHALVWLREDAQWQAVTPGAQPRLRQWFAAGLPAVVARGDGSQAPGSVRLGVPLPPSEGKQRLALQAHVADIARCTAPLTLDAVTPQAPVAVQPLLQALLAQARAHALRPHVFGSFAWQALTGLTYVHAQSDLDLLWPIETPEQARALVTLLQRWEQQHGLRADGELLLPEDNAVNWREYAGTAQQVLVKSNQDCRLLPRAALFPVRSAA.

Catalysis depends on residues Asp-135 and Asp-137.

The protein belongs to the MdcG family.

The enzyme catalyses apo-[malonate decarboxylase ACP] + 2'-(5''-triphospho-alpha-D-ribosyl)-3'-dephospho-CoA = holo-[malonate decarboxylase ACP] + diphosphate. In terms of biological role, transfers 2'-(5-triphosphoribosyl)-3'-dephosphocoenzyme-A to the apo-[acyl-carrier-protein] of the malonate decarboxylase to yield holo-[acyl-carrier-protein]. The polypeptide is Phosphoribosyl-dephospho-CoA transferase (Xanthomonas euvesicatoria pv. vesicatoria (strain 85-10) (Xanthomonas campestris pv. vesicatoria)).